A 254-amino-acid chain; its full sequence is Large ribosomal subunit protein uL2 (254 aa).

This sequence belongs to the universal ribosomal protein uL2 family.

In Eremothecium gossypii (strain ATCC 10895 / CBS 109.51 / FGSC 9923 / NRRL Y-1056) (Yeast), this protein is Large ribosomal subunit protein uL2 (RPL2).